The chain runs to 347 residues: Eukaryotic translation initiation factor 3 subunit I (347 aa).

WD repeat units follow at residues 8–47 (GHER…RLGT), 50–89 (DHSG…AVHS), 150–190 (EQAT…VQAK), 192–233 (IHEK…KTYK), and 289–328 (GHFG…FDFK).

Belongs to the eIF-3 subunit I family. In terms of assembly, component of the eukaryotic translation initiation factor 3 (eIF-3) complex.

Its subcellular location is the cytoplasm. Functionally, component of the eukaryotic translation initiation factor 3 (eIF-3) complex, which is involved in protein synthesis of a specialized repertoire of mRNAs and, together with other initiation factors, stimulates binding of mRNA and methionyl-tRNAi to the 40S ribosome. The eIF-3 complex specifically targets and initiates translation of a subset of mRNAs involved in cell proliferation. The chain is Eukaryotic translation initiation factor 3 subunit I from Kluyveromyces lactis (strain ATCC 8585 / CBS 2359 / DSM 70799 / NBRC 1267 / NRRL Y-1140 / WM37) (Yeast).